A 234-amino-acid chain; its full sequence is Proteasome subunit alpha type-2 (234 aa).

This sequence belongs to the peptidase T1A family. As to quaternary structure, the 26S proteasome consists of a 20S proteasome core and two 19S regulatory subunits. The 20S proteasome core is composed of 28 subunits that are arranged in four stacked rings, resulting in a barrel-shaped structure. The two end rings are each formed by seven alpha subunits, and the two central rings are each formed by seven beta subunits. The catalytic chamber with the active sites is on the inside of the barrel. Interacts with Rpn6.

It localises to the cytoplasm. The protein resides in the nucleus. The proteasome is a multicatalytic proteinase complex which is characterized by its ability to cleave peptides with Arg, Phe, Tyr, Leu, and Glu adjacent to the leaving group at neutral or slightly basic pH. The proteasome has an ATP-dependent proteolytic activity. In Drosophila melanogaster (Fruit fly), this protein is Proteasome subunit alpha type-2 (Prosalpha2).